Here is a 65-residue protein sequence, read N- to C-terminus: VESP-VB1 (65 aa).

A signal peptide spans 1-23; the sequence is MKMSILFLFALIASLACLQLTFA. AXPX repeat units lie at residues 23–26, 27–30, 31–34, 35–38, 39–42, 43–46, and 47–50; these read AAPA, ASPL, ANPG, ASPE, AAPL, ADPL, and ADPF. A propeptide spanning residues 24–49 is cleaved from the precursor; it reads APAASPLANPGASPEAAPLADPLADP. Residue Leu-62 is modified to Leucine amide.

In terms of tissue distribution, expressed by the venom gland.

The protein localises to the secreted. In terms of biological role, antimicrobial peptide. Shows activity against both Gram-positive (S.aureus MIC=1.0-3.75 ug/ml) and -negative (E.coli MIC=7.5-15 ug/ml) bacteria, as well against fungi (C.albicans MIC=30 ug/ml). Also promotes important mast cell degranulation. Shows little hemolytic activity on rabbit and human erythrocytes. Its mast cell degranulation activity may be related to the activation of G-protein coupled receptors in mast cells as well as interaction with other proteins located in cell endosomal membranes in the mast cells. This is VESP-VB1 from Vespa bicolor (Black shield wasp).